We begin with the raw amino-acid sequence, 101 residues long: Large ribosomal subunit protein uL24 (101 aa).

Belongs to the universal ribosomal protein uL24 family. In terms of assembly, part of the 50S ribosomal subunit.

Its function is as follows. One of two assembly initiator proteins, it binds directly to the 5'-end of the 23S rRNA, where it nucleates assembly of the 50S subunit. In terms of biological role, one of the proteins that surrounds the polypeptide exit tunnel on the outside of the subunit. The chain is Large ribosomal subunit protein uL24 from Borrelia recurrentis (strain A1).